A 505-amino-acid polypeptide reads, in one-letter code: L-amino-acid oxidase (505 aa).

A signal peptide spans 1–18; sequence MNVFLMFSLLFLAALGSC. The cysteines at positions 28 and 191 are disulfide-linked. Residues 61–62, 81–82, R89, and 105–108 contribute to the FAD site; these read MS, EA, and GPMR. R108 contacts substrate. N-linked (GlcNAc...) asparagine glycosylation occurs at N190. H241 is a substrate binding site. V279 provides a ligand contact to FAD. C349 and C430 are joined by a disulfide. An N-linked (GlcNAc...) asparagine glycan is attached at N379. Y390 is a substrate binding site. Residues E475 and 482-487 each bind FAD; that span reads GWIDST. A substrate-binding site is contributed by 482–483; it reads GW.

The protein belongs to the flavin monoamine oxidase family. FIG1 subfamily. Monomer. This is in contrast with most of its orthologs, that are non-covalently linked homodimers. FAD is required as a cofactor. In terms of processing, N-glycosylated. As to expression, expressed by the venom gland.

The protein resides in the secreted. It carries out the reaction an L-alpha-amino acid + O2 + H2O = a 2-oxocarboxylate + H2O2 + NH4(+). The catalysed reaction is L-leucine + O2 + H2O = 4-methyl-2-oxopentanoate + H2O2 + NH4(+). In terms of biological role, catalyzes an oxidative deamination of predominantly hydrophobic and aromatic L-amino acids, thus producing hydrogen peroxide that may contribute to the diverse toxic effects of this enzyme. Shows activity on L-Leu. Exhibits diverse biological activities, such as hemorrhage, edema, antibacterial and antiparasitic activities, as well as regulation of platelet aggregation. Effects of snake L-amino oxidases on platelets are controversial, since they either induce aggregation or inhibit agonist-induced aggregation. These different effects are probably due to different experimental conditions. This protein has an ability to induce hemolysis and apoptosis. The protein is L-amino-acid oxidase of Protobothrops flavoviridis (Habu).